The following is a 473-amino-acid chain: Sulfhydrylase-like protein lolC1 (473 aa).

Lysine 226 carries the N6-(pyridoxal phosphate)lysine modification.

Belongs to the trans-sulfuration enzymes family. The cofactor is pyridoxal 5'-phosphate.

It participates in alkaloid biosynthesis. Functionally, sulfhydrylase-like protein; part of the gene cluster that mediates the biosynthesis of loline alkaloids, potent insecticidal agents composed of a pyrrolizidine ring system and an uncommon ether bridge linking carbons 2 and 7. Lolines are structurally differentiated by the various modifications of the L-amino group and include norloline, loline, N-methylloline, N-acetylloline, N-acetylnorloline, and N-formylloline. The first committed step is the condensation of O-acetyl-L-homoserine (derived from L-aspartic acid) and L-proline, probably catalyzed by the gamma-type pyridoxal 5'-phosphate(PLP)-dependent enzyme lolC, to give the diamino diacid, NACPP. Ensuing cyclization, decarboxylation, and acetylation steps yield 1-exo-acetamidopyrrolizidine (AcAP). LolO is required for installation of the ether bridge upon the pathway intermediate, 1-exo-acetamidopyrrolizidine (AcAP). In sequential 2-oxoglutarate- and O(2)-consuming steps, lolO removes hydrogens from C2 and C7 of AcAP to form both carbon-oxygen bonds in N-acetylnorloline (NANL), the precursor to all other lolines. The enzymes lolD, lolE, lolF and lolT have also been proposed to be involved in the ether-bridge installation. Further processing of the exocyclic moiety of NANL by fungal N-acetamidase (LolN), methyltransferase (LolM), and cytochrome P450 (LolP) enzymes, with occasional involvement of a plant acetyltransferase, generates the other known lolines. LolN transforms NANL to norlonine which is monomethylated and dimethylated to respectively lonine and N-methyllonine (NML) by lolM. LolP catalyzes hydroxylation of the methyl group in N-methylloline (NML) and further oxygenation to N-formylloline (NFL). A plant acetyltransferase is responsible for the acetylation of loline to form N-acetylloline (NAL). LolA might interact with aspartate kinase to prevent feedback inhibition of its activity by these end products and thereby promote production of L-homoserine from L-aspartate. The protein is Sulfhydrylase-like protein lolC1 of Epichloe uncinata (Endophyte fungus).